The sequence spans 715 residues: Fatty acid oxidation complex subunit alpha (715 aa).

An enoyl-CoA hydratase/isomerase region spans residues methionine 1 to alanine 190. Aspartate 297 contributes to the substrate binding site. Residues lysine 312–glycine 715 are 3-hydroxyacyl-CoA dehydrogenase. NAD(+) contacts are provided by residues methionine 325, aspartate 344, valine 401–glutamate 403, lysine 408, and serine 430. The active-site For 3-hydroxyacyl-CoA dehydrogenase activity is histidine 451. Residue asparagine 454 participates in NAD(+) binding. Residues asparagine 501 and tyrosine 660 each coordinate substrate.

It in the N-terminal section; belongs to the enoyl-CoA hydratase/isomerase family. In the C-terminal section; belongs to the 3-hydroxyacyl-CoA dehydrogenase family. In terms of assembly, heterotetramer of two alpha chains (FadB) and two beta chains (FadA).

The catalysed reaction is a (3S)-3-hydroxyacyl-CoA + NAD(+) = a 3-oxoacyl-CoA + NADH + H(+). The enzyme catalyses a (3S)-3-hydroxyacyl-CoA = a (2E)-enoyl-CoA + H2O. It catalyses the reaction a 4-saturated-(3S)-3-hydroxyacyl-CoA = a (3E)-enoyl-CoA + H2O. It carries out the reaction (3S)-3-hydroxybutanoyl-CoA = (3R)-3-hydroxybutanoyl-CoA. The catalysed reaction is a (3Z)-enoyl-CoA = a 4-saturated (2E)-enoyl-CoA. The enzyme catalyses a (3E)-enoyl-CoA = a 4-saturated (2E)-enoyl-CoA. It participates in lipid metabolism; fatty acid beta-oxidation. Its function is as follows. Involved in the aerobic and anaerobic degradation of long-chain fatty acids via beta-oxidation cycle. Catalyzes the formation of 3-oxoacyl-CoA from enoyl-CoA via L-3-hydroxyacyl-CoA. It can also use D-3-hydroxyacyl-CoA and cis-3-enoyl-CoA as substrate. This is Fatty acid oxidation complex subunit alpha from Pseudomonas aeruginosa (strain LESB58).